Reading from the N-terminus, the 140-residue chain is Cysteine proteinase inhibitor 1 (140 aa).

A signal peptide spans 1–26; sequence MRKYRVAGLVAALLVLHSLATPSAQA. The Cystatin domain occupies 48 to 135; that stretch reads GGVEPVGNEN…KELQEFKPVD (88 aa). The short motif at 91 to 95 is the Secondary area of contact element; sequence QVVAG.

This sequence belongs to the cystatin family. Phytocystatin subfamily.

The protein localises to the secreted. Its function is as follows. There are two distinct cystatins in rice seeds (Oryzacystatin-1 and -2) with different specificities against cysteine proteinases. May be involved in the control of germination by inhibition of endogenous cysteine proteinases. May play a role in defense by inhibiting exogenous proteases such as those present in digestive tracks of insects and nematodes. This chain is Cysteine proteinase inhibitor 1, found in Oryza sativa subsp. japonica (Rice).